Reading from the N-terminus, the 173-residue chain is Translation initiation factor IF-3 (173 aa).

Belongs to the IF-3 family. In terms of assembly, monomer.

The protein resides in the cytoplasm. Functionally, IF-3 binds to the 30S ribosomal subunit and shifts the equilibrium between 70S ribosomes and their 50S and 30S subunits in favor of the free subunits, thus enhancing the availability of 30S subunits on which protein synthesis initiation begins. This chain is Translation initiation factor IF-3, found in Parvibaculum lavamentivorans (strain DS-1 / DSM 13023 / NCIMB 13966).